The primary structure comprises 131 residues: Protein FAM107B (131 aa).

Alanine 2 carries the N-acetylalanine modification. The disordered stretch occupies residues 39–79 (MNQKRGLAPQNKPELQKVMEKRRRDQVIKQKEEEAQKKKSD). Position 50 is an N6-acetyllysine (lysine 50). The segment covering 52-79 (ELQKVMEKRRRDQVIKQKEEEAQKKKSD) has biased composition (basic and acidic residues). A coiled-coil region spans residues 61-112 (RRDQVIKQKEEEAQKKKSDLEIELLKRQQKLEQLELEKQKLQEEQENAPEFV).

The protein belongs to the FAM107 family. As to expression, expressed in the hippocampus and hypothalamus. Expressed in the pontine nuclei and reticulotegmental nucleus. Expressed in Purkinje cell and nuclear layers of the cerebelum. Expressed in the choroid plexus. Expressed in hippocampal granule neurons of the dente gyrus.

The chain is Protein FAM107B from Mus musculus (Mouse).